Here is a 183-residue protein sequence, read N- to C-terminus: Archaemetzincin (183 aa).

A Zn(2+)-binding site is contributed by histidine 131. Catalysis depends on glutamate 132, which acts as the Proton acceptor. Zn(2+) is bound by residues histidine 135, histidine 141, cysteine 142, cysteine 147, and cysteine 166.

This sequence belongs to the peptidase M54 family. As to quaternary structure, monomer. It depends on Zn(2+) as a cofactor.

Functionally, probable zinc metalloprotease whose natural substrate is unknown. This chain is Archaemetzincin, found in Saccharolobus solfataricus (strain ATCC 35092 / DSM 1617 / JCM 11322 / P2) (Sulfolobus solfataricus).